Reading from the N-terminus, the 225-residue chain is Helicostatins (225 aa).

The first 18 residues, 1–18 (MLYSSLPVCFLVLGAALC), serve as a signal peptide directing secretion. A propeptide spanning residues 19-48 (APERMQNEAEPHDLQPHEAEPHSDHVAPLA) is cleaved from the precursor. Leucine amide is present on residues leucine 58, leucine 79, and leucine 90. Positions 94–127 (SVDEDQSNDEQQLTTSDLDQAALAELFDQYDDAE) are excised as a propeptide. Leucine 137 carries the leucine amide modification. A propeptide spanning residues 141 to 149 (FADDETSEE) is cleaved from the precursor. Leucine 159, leucine 170, leucine 181, leucine 192, and leucine 206 each carry leucine amide. The interval 205–225 (GLGKRSGDDVSADDSDNYFDV) is disordered. Positions 210-225 (SGDDVSADDSDNYFDV) are excised as a propeptide. A compositionally biased stretch (acidic residues) spans 214–225 (VSADDSDNYFDV).

Belongs to the allatostatin family. Highly expressed in the CNS and gut of larvae. Also expressed in the cells of the larval brain and ventral nerve cord and in endocrine cells of the midgut.

It is found in the secreted. Functionally, may act as a neurotransmitter or neuromodulator. The polypeptide is Helicostatins (Helicoverpa armigera (Cotton bollworm)).